The primary structure comprises 418 residues: UDP-N-acetylglucosamine 1-carboxyvinyltransferase (418 aa).

Residue 22–23 (KN) coordinates phosphoenolpyruvate. UDP-N-acetyl-alpha-D-glucosamine is bound at residue R92. C116 serves as the catalytic Proton donor. C116 is modified (2-(S-cysteinyl)pyruvic acid O-phosphothioketal). UDP-N-acetyl-alpha-D-glucosamine is bound by residues D305 and V327.

Belongs to the EPSP synthase family. MurA subfamily.

The protein resides in the cytoplasm. It carries out the reaction phosphoenolpyruvate + UDP-N-acetyl-alpha-D-glucosamine = UDP-N-acetyl-3-O-(1-carboxyvinyl)-alpha-D-glucosamine + phosphate. The protein operates within cell wall biogenesis; peptidoglycan biosynthesis. Functionally, cell wall formation. Adds enolpyruvyl to UDP-N-acetylglucosamine. This Endomicrobium trichonymphae protein is UDP-N-acetylglucosamine 1-carboxyvinyltransferase.